A 310-amino-acid polypeptide reads, in one-letter code: tRNA pseudouridine synthase B (310 aa).

Asp47 serves as the catalytic Nucleophile.

The protein belongs to the pseudouridine synthase TruB family. Type 1 subfamily.

It catalyses the reaction uridine(55) in tRNA = pseudouridine(55) in tRNA. Functionally, responsible for synthesis of pseudouridine from uracil-55 in the psi GC loop of transfer RNAs. The polypeptide is tRNA pseudouridine synthase B (Psychromonas ingrahamii (strain DSM 17664 / CCUG 51855 / 37)).